The chain runs to 581 residues: DNA polymerase alpha subunit B (581 aa).

It belongs to the DNA polymerase alpha subunit B family. As to quaternary structure, DNA polymerase alpha:primase is a four subunit enzyme complex, which is assembled throughout the cell cycle, and consists of the two DNA polymerase subunits A and B, and the DNA primase large and small subunits. Subunit B binds to subunit A.

The protein resides in the nucleus. In terms of biological role, may play an essential role at the early stage of chromosomal DNA replication by coupling the polymerase alpha/primase complex to the cellular replication machinery. Required for the distribution of pie-1 in cell divsion. The protein is DNA polymerase alpha subunit B (div-1) of Caenorhabditis elegans.